Reading from the N-terminus, the 309-residue chain is Probable manganese-dependent inorganic pyrophosphatase (309 aa).

Residues histidine 9, aspartate 13, aspartate 15, aspartate 75, histidine 97, and aspartate 149 each contribute to the Mn(2+) site.

The protein belongs to the PPase class C family. Mn(2+) serves as cofactor.

Its subcellular location is the cytoplasm. The enzyme catalyses diphosphate + H2O = 2 phosphate + H(+). In Bacillus cereus (strain ZK / E33L), this protein is Probable manganese-dependent inorganic pyrophosphatase.